A 355-amino-acid polypeptide reads, in one-letter code: Na(+)/H(+) exchange regulatory cofactor NHE-RF1 (355 aa).

S2 is subject to N-acetylserine. A phosphoserine mark is found at S2 and S46. Residues 14–94 (LCCLEKGPNG…AVRLLVVDPE (81 aa)) enclose the PDZ 1 domain. 2 stretches are compositionally biased toward basic and acidic residues: residues 110–119 (LLRPQEKSEQ) and 127–146 (DTHEAGDQNEAEKSHLRELR). Residues 110–146 (LLRPQEKSEQAEPPAAADTHEAGDQNEAEKSHLRELR) are disordered. In terms of domain architecture, PDZ 2 spans 149–229 (LCTMKKGPNG…EAKLLVVDKE (81 aa)). The tract at residues 244-355 (EHLDGPLPEP…SKKNELFSNL (112 aa)) is disordered. The span at 259-268 (IQKESSREAL) shows a compositional bias: basic and acidic residues. S264, S275, S285, and S286 each carry phosphoserine. Low complexity predominate over residues 270–286 (EPASESPRPALARSASS). T288 is modified (phosphothreonine). Phosphoserine occurs at positions 289, 294, and 297. Positions 303-323 (STEPSSTSSSSSDPILDLNIS) are enriched in low complexity. Basic and acidic residues predominate over residues 345–355 (WSKKNELFSNL).

In terms of assembly, homodimer, and heterodimer with NHERF2. Binds the N-termini of EZR, RDX and MSN. Binds the C-termini of PDGFRA, PDGFRB, ADRB2 and NOS2. Binds ARHGAP17, EPI64, RACK1, OPRK1, GNAQ, CTNNB1, PLCB3 and CLCN3. Forms a complex with CFTR and SLC4A7. Forms a complex with SLC4A7 and ATP6V1B1. Binds PDZK1. Binds the C-terminus of PAG1. In resting T-cells, part of a PAG1-NHERF1-MSN complex which is disrupted upon TCR activation. Directly interacts with HTR4. Interacts with MCC. Interacts with TRPC4 (via the PDZ-binding domain). Interacts (via the PDZ 1 domain) with PODXL (via the C-terminal PDZ-binding motif DTHL); interaction is not detected in glomerular epithelium cells. Interacts (via the PDZ 1 domain) with PODXL (via the C-terminal PDZ-binding motif DTHL); the interaction take place early in the secretory pathway and is necessary for its apical membrane sorting. Interacts with SLC34A1. Interacts with CFTR, SLC26A3 and SLC26A6. Interacts (via PDZ domains) with ACE2 (via PDZ-binding motif); the interaction may enhance ACE2 membrane residence. Expressed in spermatogenic cells.

Its subcellular location is the cytoplasm. It is found in the apical cell membrane. The protein resides in the cell projection. It localises to the filopodium. The protein localises to the ruffle. Its subcellular location is the microvillus. It is found in the endomembrane system. Functionally, scaffold protein that connects plasma membrane proteins with members of the ezrin/moesin/radixin family and thereby helps to link them to the actin cytoskeleton and to regulate their surface expression. Necessary for recycling of internalized ADRB2. Was first known to play a role in the regulation of the activity and subcellular location of SLC9A3. Necessary for cAMP-mediated phosphorylation and inhibition of SLC9A3. May enhance Wnt signaling. May participate in HTR4 targeting to microvilli. Involved in the regulation of phosphate reabsorption in the renal proximal tubules. Involved in sperm capacitation. May participate in the regulation of the chloride and bicarbonate homeostasis in spermatozoa. The sequence is that of Na(+)/H(+) exchange regulatory cofactor NHE-RF1 (Nherf1) from Mus musculus (Mouse).